The primary structure comprises 205 residues: Dephospho-CoA kinase (205 aa).

In terms of domain architecture, DPCK spans 7–204; that stretch reads LVGLTGGIGS…ARYLAAARAT (198 aa). 15–20 contributes to the ATP binding site; it reads GSGKSA.

The protein belongs to the CoaE family.

It is found in the cytoplasm. The catalysed reaction is 3'-dephospho-CoA + ATP = ADP + CoA + H(+). It participates in cofactor biosynthesis; coenzyme A biosynthesis; CoA from (R)-pantothenate: step 5/5. Catalyzes the phosphorylation of the 3'-hydroxyl group of dephosphocoenzyme A to form coenzyme A. This is Dephospho-CoA kinase from Aromatoleum aromaticum (strain DSM 19018 / LMG 30748 / EbN1) (Azoarcus sp. (strain EbN1)).